Here is a 269-residue protein sequence, read N- to C-terminus: Putative ABC transporter ATP-binding protein PF0528 (269 aa).

The ABC transporter domain occupies 6-237 (IVVENLYSSY…EILKRNNLDV (232 aa)). Residue 39-46 (GPNGAGKS) coordinates ATP.

Belongs to the ABC transporter superfamily.

The protein localises to the cell membrane. Its function is as follows. Probably part of an ABC transporter complex. Responsible for energy coupling to the transport system. The polypeptide is Putative ABC transporter ATP-binding protein PF0528 (Pyrococcus furiosus (strain ATCC 43587 / DSM 3638 / JCM 8422 / Vc1)).